Consider the following 298-residue polypeptide: uncharacterized protein (298 aa).

The next 9 helical transmembrane spans lie at 10 to 30 (VIYT…WKLL), 36 to 56 (LDIL…VLFF), 76 to 96 (ILSL…YIWA), 101 to 121 (FLLE…LLGI), 142 to 162 (GVII…LLAF), 179 to 199 (AIGL…YLLF), 212 to 232 (GTWL…LLFA), 243 to 263 (VGIL…FVYH), and 271 to 291 (AFTF…QVKW). EamA domains lie at 17–148 (FIMW…ISAF) and 162–286 (FSFG…LFTF).

Belongs to the EamA transporter family.

The protein resides in the cell membrane. This is an uncharacterized protein from Bacillus subtilis (strain 168).